A 276-amino-acid chain; its full sequence is Kallikrein-10 (276 aa).

The N-terminal stretch at 1–30 is a signal peptide; sequence MRAPHLHLSAASGARALAKLLPLLMAQLWA. A glycan (N-linked (GlcNAc...) asparagine) is linked at Asn39. Positions 47–274 constitute a Peptidase S1 domain; it reads AYGSPCARGS…YMSWINKVIR (228 aa). 5 cysteine pairs are disulfide-bonded: Cys52–Cys162, Cys71–Cys87, Cys169–Cys235, Cys201–Cys215, and Cys225–Cys250. Residues His86 and Asp137 each act as charge relay system in the active site. Ser229 serves as the catalytic Charge relay system.

The protein belongs to the peptidase S1 family. Kallikrein subfamily. Expressed in breast, ovary and prostate.

The protein localises to the secreted. Has a tumor-suppressor role for NES1 in breast and prostate cancer. The polypeptide is Kallikrein-10 (KLK10) (Homo sapiens (Human)).